Reading from the N-terminus, the 671-residue chain is Major S-layer protein (671 aa).

The signal sequence occupies residues 1–24 (MKRFAALSLAALMLLTVFASAASA). N-linked (GlcNAc...) asparagine glycosylation is found at asparagine 36, asparagine 70, asparagine 116, and asparagine 350. Residues 594–650 (GEEVSGEEETPEETPTGEVTETEGEEETPTEVTETPTEGEPAPEETETTESEGTTPG) form a disordered region. The segment covering 613–622 (TETEGEEETP) has biased composition (acidic residues). Over residues 623 to 633 (TEVTETPTEGE) the composition is skewed to low complexity. Over residues 634–643 (PAPEETETTE) the composition is skewed to acidic residues. The helical transmembrane segment at 647–667 (TTPGFGFMFGLVGLLAVVYLV) threads the bilayer.

The protein belongs to the Methanosarcinales S-layer protein family. Post-translationally, glycosylated.

It localises to the secreted. The protein localises to the cell wall. Its subcellular location is the S-layer. The protein resides in the cell membrane. Functionally, S-layer protein. The S-layer is a paracrystalline mono-layered assembly of proteins which coat the surface of the cell. This chain is Major S-layer protein, found in Methanosarcina acetivorans (strain ATCC 35395 / DSM 2834 / JCM 12185 / C2A).